A 264-amino-acid chain; its full sequence is Thymidylate synthase (264 aa).

Position 21 (R21) interacts with dUMP. Residue H51 coordinates (6R)-5,10-methylene-5,6,7,8-tetrahydrofolate. 126 to 127 contributes to the dUMP binding site; sequence RR. C146 functions as the Nucleophile in the catalytic mechanism. Residues 166–169, N177, and 207–209 contribute to the dUMP site; these read RSCD and HLY. D169 is a binding site for (6R)-5,10-methylene-5,6,7,8-tetrahydrofolate. A263 contacts (6R)-5,10-methylene-5,6,7,8-tetrahydrofolate.

Belongs to the thymidylate synthase family. Bacterial-type ThyA subfamily. Homodimer.

The protein resides in the cytoplasm. It catalyses the reaction dUMP + (6R)-5,10-methylene-5,6,7,8-tetrahydrofolate = 7,8-dihydrofolate + dTMP. It functions in the pathway pyrimidine metabolism; dTTP biosynthesis. Functionally, catalyzes the reductive methylation of 2'-deoxyuridine-5'-monophosphate (dUMP) to 2'-deoxythymidine-5'-monophosphate (dTMP) while utilizing 5,10-methylenetetrahydrofolate (mTHF) as the methyl donor and reductant in the reaction, yielding dihydrofolate (DHF) as a by-product. This enzymatic reaction provides an intracellular de novo source of dTMP, an essential precursor for DNA biosynthesis. This Shigella flexneri serotype 5b (strain 8401) protein is Thymidylate synthase.